We begin with the raw amino-acid sequence, 519 residues long: Berghepain-1 (519 aa).

Topologically, residues 1-32 (MINDIRRINITTSSIESLNENSKYLKRNHKRT) are cytoplasmic. The chain crosses the membrane as a helical; Signal-anchor for type II membrane protein span at residues 33-53 (IKICAYAITTFALFFIVVVYF). The Lumenal portion of the chain corresponds to 54–519 (KNQTNVNDAN…IGIDVFFPIL (466 aa)). N55 and N143 each carry an N-linked (GlcNAc...) asparagine glycan. 4 disulfide bridges follow: C298-C340, C333-C373, C358-C378, and C427-C508. The active site involves C301. N432 carries N-linked (GlcNAc...) asparagine glycosylation. Residues H433 and N483 contribute to the active site.

This sequence belongs to the peptidase C1 family.

The protein localises to the membrane. In terms of biological role, cysteine protease. Required for host hepatocyte-derived merozoite infectivity and to a lesser extent for host erythrocyte-derived merozoite infectivity. The chain is Berghepain-1 from Plasmodium berghei (strain Anka).